The chain runs to 21 residues: Cupiennin-6a (21 aa).

Ser21 bears the Serine amide mark.

As to expression, expressed by the venom gland.

The protein localises to the secreted. The polypeptide is Cupiennin-6a (Cupiennius salei (American wandering spider)).